The sequence spans 481 residues: Exodeoxyribonuclease I (481 aa).

Residues 12 to 193 form the Exonuclease domain; it reads LFYDYETFGK…SSDVYATMNI (182 aa). Residues Asp15, Glu17, and Asp186 each contribute to the Mg(2+) site. Glu17 serves as a coordination point for substrate. The region spanning 202-350 is the ExoI SH3-like domain; that stretch reads PKLFNFFFKY…KLKKFLCSIA (149 aa). In terms of domain architecture, ExoI C-terminal spans 356–471; that stretch reads NGSNVDLKMY…ELFEYVKYTR (116 aa).

In terms of assembly, monomer. Interacts with ssb (via C-terminus); this interaction stimulates the exonuclease activity by recruiting the enzyme to its substrate. The cofactor is Mg(2+).

The enzyme catalyses Exonucleolytic cleavage in the 3'- to 5'-direction to yield nucleoside 5'-phosphates.. In terms of biological role, degrades single-stranded DNA (ssDNA) in a highly processive manner. Also functions as a DNA deoxyribophosphodiesterase that releases deoxyribose-phosphate moieties following the cleavage of DNA at an apurinic/apyrimidinic (AP) site by either an AP endonuclease or AP lyase. The chain is Exodeoxyribonuclease I (sbcB) from Buchnera aphidicola subsp. Baizongia pistaciae (strain Bp).